A 256-amino-acid polypeptide reads, in one-letter code: Homeobox protein goosecoid (256 aa).

Residues 160-219 constitute a DNA-binding region (homeobox); it reads KRRHRTIFTDEQLEALENLFQETKYPDVGTREQLARKVHLREEKVEVWFKNRRAKWRRQK. A disordered region spans residues 213–256; sequence AKWRRQKRSSSEESENAEKWNKTSSKASPEKREEEGKSDLDSDS. Positions 240–256 are enriched in basic and acidic residues; it reads SPEKREEEGKSDLDSDS.

Belongs to the paired homeobox family. Bicoid subfamily. In terms of tissue distribution, in early gastrulation, expressed in the dorsal lip. In later stages of development found in head, limbs and body wall. In the embryo, expressed in the postotic cranial neural crest cells, the frontonasal prominence, the first branchial arch and cleft, and specific regions of large joints.

The protein resides in the nucleus. In terms of biological role, regulates chordin (CHRD). May play a role in spatial programing within discrete embryonic fields or lineage compartments during organogenesis. In concert with NKX3-2, plays a role in defining the structural components of the middle ear; required for the development of the entire tympanic ring. Goosecoid-expressing regions of the gastrulating mouse egg cylinder have organizer-like activity when transplanted into Xenopus embryos. Probably involved in the regulatory networks that define neural crest cell fate specification and determine mesoderm cell lineages in mammals. This is Homeobox protein goosecoid (Gsc) from Mus musculus (Mouse).